The primary structure comprises 485 residues: Glutamate--tRNA ligase (485 aa).

A 'HIGH' region motif is present at residues 11 to 21 (PSPTGYMHVGN). Residues Cys108, Cys110, Cys135, and Asp137 each coordinate Zn(2+). Positions 252–256 (KLSKR) match the 'KMSKS' region motif. ATP is bound at residue Lys255.

This sequence belongs to the class-I aminoacyl-tRNA synthetase family. Glutamate--tRNA ligase type 1 subfamily. As to quaternary structure, monomer. It depends on Zn(2+) as a cofactor.

Its subcellular location is the cytoplasm. It carries out the reaction tRNA(Glu) + L-glutamate + ATP = L-glutamyl-tRNA(Glu) + AMP + diphosphate. Catalyzes the attachment of glutamate to tRNA(Glu) in a two-step reaction: glutamate is first activated by ATP to form Glu-AMP and then transferred to the acceptor end of tRNA(Glu). The polypeptide is Glutamate--tRNA ligase (Clostridium botulinum (strain Okra / Type B1)).